A 372-amino-acid chain; its full sequence is Saccharopine dehydrogenase [NAD(+), L-lysine-forming] (372 aa).

The L-saccharopine site is built by Arg18 and Lys77. Catalysis depends on Lys77, which acts as the Proton acceptor. Catalysis depends on His95, which acts as the Proton donor. Gln100 is a binding site for L-saccharopine. Position 129 (Arg129) interacts with NAD(+). Arg130 and Phe134 together coordinate L-saccharopine. Residues 200-201, Asp224, Thr228, Tyr248, and Val275 each bind NAD(+); that span reads GR. Cys202 and Cys246 form a disulfide bridge. 276-278 contributes to the L-saccharopine binding site; that stretch reads SAD. 316 to 319 contacts NAD(+); the sequence is IDHL.

It belongs to the AlaDH/PNT family. Monomer.

The enzyme catalyses L-saccharopine + NAD(+) + H2O = L-lysine + 2-oxoglutarate + NADH + H(+). It functions in the pathway amino-acid biosynthesis; L-lysine biosynthesis via AAA pathway; L-lysine from L-alpha-aminoadipate (fungal route): step 3/3. Catalyzes the NAD(+)-dependent cleavage of saccharopine to L-lysine and 2-oxoglutarate, the final step in the alpha-aminoadipate (AAA) pathway for lysin biosynthesis. This chain is Saccharopine dehydrogenase [NAD(+), L-lysine-forming] (lys-4), found in Neurospora crassa (strain ATCC 24698 / 74-OR23-1A / CBS 708.71 / DSM 1257 / FGSC 987).